A 323-amino-acid chain; its full sequence is Aquaporin NIP3-1 (323 aa).

N-acetylmethionine is present on M1. 2 consecutive transmembrane segments (helical) span residues 45–65 (LIGE…AIVV) and 73–93 (VTLP…IYSI). The short motif at 102-104 (NPA) is the NPA 1 element. 3 consecutive transmembrane segments (helical) span residues 122 to 142 (GYIA…RLVF), 167 to 187 (TSFV…SAVA), and 196 to 216 (FAGI…GPIS). Positions 221-223 (NPA) match the NPA 2 motif. Residues 239–259 (WLYIVSPVIGALSGAWTYGLL) traverse the membrane as a helical segment.

This sequence belongs to the MIP/aquaporin (TC 1.A.8) family. NIP (TC 1.A.8.12) subfamily.

It localises to the membrane. In terms of biological role, aquaporins facilitate the transport of water and small neutral solutes across cell membranes. The sequence is that of Aquaporin NIP3-1 (NIP3-1) from Arabidopsis thaliana (Mouse-ear cress).